The sequence spans 481 residues: Regulator of G-protein signaling 1 (481 aa).

The tract at residues 1-31 (MPALHNPSSPPPSYEAVTSYRNGNSIDSGDK) is disordered. Residues 33-227 (QQCSRLMKIT…SVHEIGKSKN (195 aa)) form a fungal-DR region. A DEP domain is found at 232–312 (PVYSVSSPSP…KGVSYFLTGK (81 aa)). Residues 344 to 474 (ILETILRKPN…AGDSLLKFLE (131 aa)) enclose the RGS domain.

It localises to the nucleus. The protein resides in the cytoplasm. Negatively regulates pheromone signaling during mating. Acts in a negative feedback loop that is essential for the mating process. This loop acts to down-regulate cellular sensitivity to pheromone. Activated by ste11. This Schizosaccharomyces pombe (strain 972 / ATCC 24843) (Fission yeast) protein is Regulator of G-protein signaling 1 (rgs1).